The chain runs to 697 residues: Polyribonucleotide nucleotidyltransferase (697 aa).

Asp-490 and Asp-496 together coordinate Mg(2+). In terms of domain architecture, KH spans 557 to 616; that stretch reads PKVVTMTIKPEKIRDVIGPGGKKINEIIDETGVKLDIEQDGTIFIGAVDKDAIARARSII. Residues 626–694 enclose the S1 motif domain; sequence GQVYEGKVKR…KQGRVNASHK (69 aa).

This sequence belongs to the polyribonucleotide nucleotidyltransferase family. Mg(2+) is required as a cofactor.

The protein localises to the cytoplasm. The catalysed reaction is RNA(n+1) + phosphate = RNA(n) + a ribonucleoside 5'-diphosphate. Functionally, involved in mRNA degradation. Catalyzes the phosphorolysis of single-stranded polyribonucleotides processively in the 3'- to 5'-direction. The protein is Polyribonucleotide nucleotidyltransferase of Staphylococcus saprophyticus subsp. saprophyticus (strain ATCC 15305 / DSM 20229 / NCIMB 8711 / NCTC 7292 / S-41).